We begin with the raw amino-acid sequence, 275 residues long: NAC domain-containing protein 2 (275 aa).

Positions 10 to 162 (LPPGFRFHPT…DWVLCRIYKK (153 aa)) constitute an NAC domain. A DNA-binding region spans residues 107–168 (VGIKKALVFY…IYKKKNLERA (62 aa)).

Expressed in roots, stem, flowers, and leaves.

Its subcellular location is the nucleus. Transcription factor that binds DNA motifs 5'-CGT[AG](5N)NACG[ACT][AC][AT][ACG][ACT]-3' and 5'-CACG[ACT][AC][AT][AGT][CT]-3' in target genes promoters. Promotes leaf senescence (developmental, light-induced and ABA-induced senescence) and regulates fruit yield and sugar content, probably by establishing abscisic acid (ABA) homeostasis. Activates the expression of senescence and ABA associated genes including NCED1, ABCG40, CYP707A2, SAG113, SGR1 and PAO, by directly binding to their promoters. The sequence is that of NAC domain-containing protein 2 from Solanum lycopersicum (Tomato).